Here is a 478-residue protein sequence, read N- to C-terminus: Catalase easC (478 aa).

The active site involves His54. Tyr343 contributes to the heme binding site. The tract at residues 459–478 (VAEKARPDSPSRAQPGQLRL) is disordered.

Belongs to the catalase family. Requires heme as cofactor.

It functions in the pathway alkaloid biosynthesis; ergot alkaloid biosynthesis. Its function is as follows. Catalase; part of the gene cluster that mediates the biosynthesis of fungal ergot alkaloid. DmaW catalyzes the first step of ergot alkaloid biosynthesis by condensing dimethylallyl diphosphate (DMAP) and tryptophan to form 4-dimethylallyl-L-tryptophan. The second step is catalyzed by the methyltransferase easF that methylates 4-dimethylallyl-L-tryptophan in the presence of S-adenosyl-L-methionine, resulting in the formation of 4-dimethylallyl-L-abrine. The catalase easC and the FAD-dependent oxidoreductase easE then transform 4-dimethylallyl-L-abrine to chanoclavine-I which is further oxidized by easD in the presence of NAD(+), resulting in the formation of chanoclavine-I aldehyde. Chanoclavine-I aldehyde is the precursor of ergoamides and ergopeptines in Clavicipitaceae, and clavine-type alcaloids such as fumiclavine in Trichocomaceae. However, the metabolites downstream of chanoclavine-I aldehyde in Arthrodermataceae have not been identified yet. This is Catalase easC from Arthroderma benhamiae (strain ATCC MYA-4681 / CBS 112371) (Trichophyton mentagrophytes).